A 161-amino-acid polypeptide reads, in one-letter code: MRNASKKHLDLPYRPGVGMMILNADNHIFVGKRIDTKISAWQMPQGGIVPGETPSIAAMREMLEEIGSDKGYIIAESKCWYSYDLPSFLIPKLWNGNFRGQKQRWFLIRFTGNNEDININTSNPEFDQWRWASLNELLSIIIPFKRKLYQAVVKEFDSLIQ.

The Nudix hydrolase domain maps to 12–154 (PYRPGVGMMI…KRKLYQAVVK (143 aa)). A Nudix box motif is present at residues 46–67 (GGIVPGETPSIAAMREMLEEIG).

The protein belongs to the Nudix hydrolase family. RppH subfamily. A divalent metal cation is required as a cofactor.

Functionally, accelerates the degradation of transcripts by removing pyrophosphate from the 5'-end of triphosphorylated RNA, leading to a more labile monophosphorylated state that can stimulate subsequent ribonuclease cleavage. This is RNA pyrophosphohydrolase from Rickettsia canadensis (strain McKiel).